Consider the following 351-residue polypeptide: Protein Wnt-8a (351 aa).

Residues 1-24 form the signal peptide; it reads MGNLFMLWAALGICCAAFSASAWS. The cysteines at positions 54 and 65 are disulfide-linked. N-linked (GlcNAc...) asparagine glycosylation is present at N103. 10 disulfides stabilise this stretch: C104–C112, C114–C132, C180–C194, C182–C189, C259–C297, C275–C290, C294–C336, C312–C327, C314–C324, and C319–C320. The O-palmitoleoyl serine moiety is linked to residue S186. N-linked (GlcNAc...) asparagine glycosylation is found at N262 and N281.

This sequence belongs to the Wnt family. As to quaternary structure, forms a soluble 1:1 complex with AFM; this prevents oligomerization and is required for prolonged biological activity. The complex with AFM may represent the physiological form in body fluids. Post-translationally, palmitoleoylation is required for efficient binding to frizzled receptors. Depalmitoleoylation leads to Wnt signaling pathway inhibition. Proteolytic processing by TIKI1 and TIKI2 promotes oxidation and formation of large disulfide-bond oligomers, leading to inactivation of WNT8A.

Its subcellular location is the secreted. It localises to the extracellular space. It is found in the extracellular matrix. In terms of biological role, ligand for members of the frizzled family of seven transmembrane receptors. Plays a role in embryonic patterning. This is Protein Wnt-8a (WNT8A) from Homo sapiens (Human).